The following is a 647-amino-acid chain: Macrolide export ATP-binding/permease protein MacB 2 (647 aa).

The region spanning 6–244 (IQLKGIERRY…VTPTAAPAGK (239 aa)) is the ABC transporter domain. 42–49 (GASGSGKS) is a binding site for ATP. Positions 223 to 247 (QEDSGRKPAAVPVTPTAAPAGKEGV) are disordered. Residues 230–242 (PAAVPVTPTAAPA) are compositionally biased toward low complexity. 4 consecutive transmembrane segments (helical) span residues 273-293 (FLTMLGIIIGIAAVVSVVALG), 527-547 (IAVISLIVGGVGVMNIMLVSV), 581-601 (LGGMLGVGVSLFIGLLFSLFV), and 610-630 (LFSILMAFGCSSLIGILFGYL).

It belongs to the ABC transporter superfamily. Macrolide exporter (TC 3.A.1.122) family. As to quaternary structure, homodimer. Part of the tripartite efflux system MacAB-TolC, which is composed of an inner membrane transporter, MacB, a periplasmic membrane fusion protein, MacA, and an outer membrane component, TolC. The complex forms a large protein conduit and can translocate molecules across both the inner and outer membranes. Interacts with MacA.

The protein resides in the cell inner membrane. In terms of biological role, part of the tripartite efflux system MacAB-TolC. MacB is a non-canonical ABC transporter that contains transmembrane domains (TMD), which form a pore in the inner membrane, and an ATP-binding domain (NBD), which is responsible for energy generation. Confers resistance against macrolides. The polypeptide is Macrolide export ATP-binding/permease protein MacB 2 (Aeromonas hydrophila subsp. hydrophila (strain ATCC 7966 / DSM 30187 / BCRC 13018 / CCUG 14551 / JCM 1027 / KCTC 2358 / NCIMB 9240 / NCTC 8049)).